Consider the following 375-residue polypeptide: Tryptophan dimethylallyltransferase (375 aa).

L-tryptophan-binding positions include 83-84 and E92; that span reads IL. Positions 103, 189, and 191 each coordinate substrate. L-tryptophan contacts are provided by Y193 and R246. Substrate contacts are provided by R259, K261, Y263, Q345, and Y347.

Belongs to the tryptophan dimethylallyltransferase family. As to quaternary structure, homodimer.

It catalyses the reaction L-tryptophan + dimethylallyl diphosphate = 4-(3-methylbut-2-enyl)-L-tryptophan + diphosphate. The protein operates within alkaloid biosynthesis; ergot alkaloid biosynthesis. Its function is as follows. Tryptophan dimethylallyltransferase; part of the gene cluster that mediates the biosynthesis of fungal ergot alkaloid. DmaW catalyzes the first step of ergot alkaloid biosynthesis by condensing dimethylallyl diphosphate (DMAP) and tryptophan to form 4-dimethylallyl-L-tryptophan. The second step is catalyzed by the methyltransferase easF that methylates 4-dimethylallyl-L-tryptophan in the presence of S-adenosyl-L-methionine, resulting in the formation of 4-dimethylallyl-L-abrine. The catalase easC and the FAD-dependent oxidoreductase easE then transform 4-dimethylallyl-L-abrine to chanoclavine-I which is further oxidized by easD in the presence of NAD(+), resulting in the formation of chanoclavine-I aldehyde. Chanoclavine-I aldehyde is the precursor of ergoamides and ergopeptines in Clavicipitaceae, and clavine-type alcaloids such as fumiclavine in Trichocomaceae. However, the metabolites downstream of chanoclavine-I aldehyde in Arthrodermataceae have not been identified yet. The protein is Tryptophan dimethylallyltransferase of Trichophyton verrucosum (strain HKI 0517).